Consider the following 761-residue polypeptide: Cyclin-F (761 aa).

The Nuclear localization signal 1 signature appears at 19–27 (RRRIKRRPR). The F-box domain maps to 28-75 (VLTLLSLPEDVLLYVLECLPAVDILSMREVHPHLRSLVDSHSSVWARA). In terms of domain architecture, Cyclin N-terminal spans 300-411 (NKSSIFTTQK…EIISALEGKI (112 aa)). Short sequence motifs (d box) lie at residues 316 to 319 (RYIL) and 355 to 358 (RAKL). Disordered regions lie at residues 575–594 (NKTK…SFVT) and 677–761 (AENG…SDEL). Basic and acidic residues predominate over residues 580–590 (RREESIQEDRG). The interval 589 to 745 (RGSFVTTPTA…LLKASRRQVK (157 aa)) is PEST. Residues 691–718 (SSGYSSVSSGGSPTSSSSPGLPFTPTPG) are compositionally biased toward low complexity. The span at 739-749 (ASRRQVKRKNQ) shows a compositional bias: basic residues.

It belongs to the cyclin family. Cyclin AB subfamily. Component of the SCF(CCNF) complex.

The protein localises to the nucleus. It is found in the cytoplasm. It localises to the perinuclear region. The protein resides in the cytoskeleton. Its subcellular location is the microtubule organizing center. The protein localises to the centrosome. It is found in the centriole. Functionally, substrate recognition component of the SCF(CCNF) E3 ubiquitin-protein ligase complex which mediates the ubiquitination and subsequent proteasomal degradation of target proteins. The SCF(CCNF) E3 ubiquitin-protein ligase complex is an integral component of the ubiquitin proteasome system (UPS) and links proteasome degradation to the cell cycle. Mediates the substrate recognition and the proteasomal degradation of various target proteins during G2 phase involved in the regulation of cell cycle progression and in the maintenance of genome stability. This Xenopus laevis (African clawed frog) protein is Cyclin-F (ccnf).